Reading from the N-terminus, the 435-residue chain is Hyaluronidase-1 (435 aa).

The N-terminal stretch at 1 to 21 (MAAHLLPICTLFLNLLSVAQG) is a signal peptide. Cystine bridges form between Cys43–Cys333 and Cys207–Cys221. N-linked (GlcNAc...) asparagine glycans are attached at residues Asn70, Asn99, Asn107, and Asn121. Glu131 (proton donor) is an active-site residue. Residues Asn216, Asn256, and Asn350 are each glycosylated (N-linked (GlcNAc...) asparagine). Disulfide bonds link Cys358/Cys369, Cys363/Cys418, and Cys420/Cys429. In terms of domain architecture, EGF-like spans 418–429 (CRCYPGWRGTWC).

It belongs to the glycosyl hydrolase 56 family. In terms of tissue distribution, highly expressed in spleen, kidney, and lung.

The protein localises to the secreted. It is found in the lysosome. The enzyme catalyses Random hydrolysis of (1-&gt;4)-linkages between N-acetyl-beta-D-glucosamine and D-glucuronate residues in hyaluronate.. Functionally, may have a role in promoting tumor progression. May block the TGFB1-enhanced cell growth. This chain is Hyaluronidase-1 (HYAL1), found in Sus scrofa (Pig).